We begin with the raw amino-acid sequence, 149 residues long: UPF0178 protein HEAR0259 (149 aa).

It belongs to the UPF0178 family.

The chain is UPF0178 protein HEAR0259 from Herminiimonas arsenicoxydans.